The following is a 628-amino-acid chain: Keratin, type II cytoskeletal 3 (628 aa).

The tract at residues 1–21 is disordered; it reads MSRQASKTSGGGSQGFSGRSA. The head stretch occupies residues 1-197; sequence MSRQASKTSG…DPQIGQVKAQ (197 aa). Phosphoserine occurs at positions 13 and 56. The interval 198-233 is coil 1A; the sequence is EREQIKTLNNKFASFIDKVRFLEQQNKVLETKWNLL. Residues 198 to 513 enclose the IF rod domain; that stretch reads EREQIKTLNN…KLLEGEEYRM (316 aa). The interval 234-254 is linker 1; it reads QQQGTSSISGTNNLEPLFENH. The coil 1B stretch occupies residues 255–346; it reads INYLRSYLDN…TLYDAELSQM (92 aa). K296 carries the N6,N6-dimethyllysine modification. The interval 347–370 is linker 12; that stretch reads QSHISDTSVVLSMDNNRSLDLDSI. The residue at position 364 (S364) is a Phosphoserine. Residues 371–509 are coil 2; the sequence is IAEVRAQYED…ATYRKLLEGE (139 aa). The segment at 510–628 is tail; it reads EYRMSGECPS…SSQSSQRYSR (119 aa). The tract at residues 605–628 is disordered; the sequence is SSASNRGGSIKFSQSSQSSQRYSR. The span at 617-628 shows a compositional bias: low complexity; that stretch reads SQSSQSSQRYSR.

The protein belongs to the intermediate filament family. As to quaternary structure, heterotetramer of two type I and two type II keratins. Keratin-3 associates with keratin-12. In terms of tissue distribution, cornea specific.

The polypeptide is Keratin, type II cytoskeletal 3 (KRT3) (Homo sapiens (Human)).